A 308-amino-acid polypeptide reads, in one-letter code: Aspartate carbamoyltransferase catalytic subunit (308 aa).

Positions 57 and 58 each coordinate carbamoyl phosphate. Lys-86 lines the L-aspartate pocket. Carbamoyl phosphate contacts are provided by Arg-107, His-135, and Gln-138. L-aspartate-binding residues include Arg-168 and Arg-229. Leu-268 and Pro-269 together coordinate carbamoyl phosphate.

The protein belongs to the aspartate/ornithine carbamoyltransferase superfamily. ATCase family. Heterooligomer of catalytic and regulatory chains.

It carries out the reaction carbamoyl phosphate + L-aspartate = N-carbamoyl-L-aspartate + phosphate + H(+). Its pathway is pyrimidine metabolism; UMP biosynthesis via de novo pathway; (S)-dihydroorotate from bicarbonate: step 2/3. Its function is as follows. Catalyzes the condensation of carbamoyl phosphate and aspartate to form carbamoyl aspartate and inorganic phosphate, the committed step in the de novo pyrimidine nucleotide biosynthesis pathway. This is Aspartate carbamoyltransferase catalytic subunit from Thermococcus gammatolerans (strain DSM 15229 / JCM 11827 / EJ3).